The chain runs to 224 residues: Large ribosomal subunit protein uL3 (224 aa).

N5-methylglutamine is present on Gln159.

The protein belongs to the universal ribosomal protein uL3 family. In terms of assembly, part of the 50S ribosomal subunit. Forms a cluster with proteins L14 and L19. Post-translationally, methylated by PrmB.

Its function is as follows. One of the primary rRNA binding proteins, it binds directly near the 3'-end of the 23S rRNA, where it nucleates assembly of the 50S subunit. This Herminiimonas arsenicoxydans protein is Large ribosomal subunit protein uL3.